The following is a 521-amino-acid chain: MVDSTIRLVATIFLISLTQQIEVCNKAQQQGPYTLVDYQEKPLNISRIQIKVVKTSVATKGLNFHIGYRAVWRGYCYNGGSLDKNTGCYNDLIPKSPTESELRTWSKSQKCCTGPDAVDAWGSDARICWAEWKMELCHTAKELKKYSNNNHFAYHTCNLSWRCGLKSTHIEVRLQASGGLVSMVAVMPNGTLIPIEGTRPTYWTEDSFAYLYDPAGTEKKTESTFLWCFKEHIRPTTELSGAVYDTHYLGGTYDKNPQFNYYCRDNGYYFELPANRLVCLPTSCYKREGAIVNTMHPNTWKVSEKLHSASQFDVNNVVHSLVYETEGLRLALSQLDHRFATLSRLFNRLTQSLAKIDDRLLGTLLGQDVSSKFISPTKFMLSPCLSTPEGDSNCHNHSIYRDGRWVHNSDPTQCFSLSKSQPVDLYSFKELWLPQLLDVNVKGVVADEEGWSFVAQSKQALIDTMTYTKNGGKGTSLEDVLGYPSGWINGKLQGLLLNGAISWVVVIGVVLVGVCLMRRVF.

A signal peptide spans 1–20 (MVDSTIRLVATIFLISLTQQ). N-linked (GlcNAc...) asparagine; by host glycans are attached at residues Asn-44, Asn-158, Asn-189, and Asn-396. Residues 501–517 (ISWVVVIGVVLVGVCLM) form a helical membrane-spanning segment.

Homooligomer; disulfide-linked (possibly homodimer).

It is found in the virion membrane. In terms of biological role, attaches the virus to host cellular receptor and later induces fusion of virion with host membrane. The protein is Envelope glycoprotein (P4) of Dhori virus (strain Indian/1313/61) (Dho).